Here is a 478-residue protein sequence, read N- to C-terminus: Protein nucleotidyltransferase YdiU (478 aa).

Residues G74, G76, R77, K97, D109, G110, R160, and R167 each contribute to the ATP site. Residue D236 is the Proton acceptor of the active site. Positions 237 and 246 each coordinate Mg(2+). D246 contacts ATP.

The protein belongs to the SELO family. The cofactor is Mg(2+). Mn(2+) is required as a cofactor.

The enzyme catalyses L-seryl-[protein] + ATP = 3-O-(5'-adenylyl)-L-seryl-[protein] + diphosphate. It carries out the reaction L-threonyl-[protein] + ATP = 3-O-(5'-adenylyl)-L-threonyl-[protein] + diphosphate. It catalyses the reaction L-tyrosyl-[protein] + ATP = O-(5'-adenylyl)-L-tyrosyl-[protein] + diphosphate. The catalysed reaction is L-histidyl-[protein] + UTP = N(tele)-(5'-uridylyl)-L-histidyl-[protein] + diphosphate. The enzyme catalyses L-seryl-[protein] + UTP = O-(5'-uridylyl)-L-seryl-[protein] + diphosphate. It carries out the reaction L-tyrosyl-[protein] + UTP = O-(5'-uridylyl)-L-tyrosyl-[protein] + diphosphate. In terms of biological role, nucleotidyltransferase involved in the post-translational modification of proteins. It can catalyze the addition of adenosine monophosphate (AMP) or uridine monophosphate (UMP) to a protein, resulting in modifications known as AMPylation and UMPylation. The polypeptide is Protein nucleotidyltransferase YdiU (Chromobacterium violaceum (strain ATCC 12472 / DSM 30191 / JCM 1249 / CCUG 213 / NBRC 12614 / NCIMB 9131 / NCTC 9757 / MK)).